We begin with the raw amino-acid sequence, 417 residues long: Serine hydroxymethyltransferase (417 aa).

At lysine 54 the chain carries N6-acetyllysine. Residues leucine 121 and 125–127 (GHL) contribute to the (6S)-5,6,7,8-tetrahydrofolate site. Lysine 229 carries the N6-(pyridoxal phosphate)lysine modification. 3 positions are modified to N6-acetyllysine: lysine 250, lysine 285, and lysine 354. Position 355-357 (355-357 (SPF)) interacts with (6S)-5,6,7,8-tetrahydrofolate. Lysine 375 carries the post-translational modification N6-acetyllysine.

This sequence belongs to the SHMT family. As to quaternary structure, homodimer. Requires pyridoxal 5'-phosphate as cofactor.

It localises to the cytoplasm. The catalysed reaction is (6R)-5,10-methylene-5,6,7,8-tetrahydrofolate + glycine + H2O = (6S)-5,6,7,8-tetrahydrofolate + L-serine. The protein operates within one-carbon metabolism; tetrahydrofolate interconversion. Its pathway is amino-acid biosynthesis; glycine biosynthesis; glycine from L-serine: step 1/1. Catalyzes the reversible interconversion of serine and glycine with tetrahydrofolate (THF) serving as the one-carbon carrier. This reaction serves as the major source of one-carbon groups required for the biosynthesis of purines, thymidylate, methionine, and other important biomolecules. Also exhibits THF-independent aldolase activity toward beta-hydroxyamino acids, producing glycine and aldehydes, via a retro-aldol mechanism. The chain is Serine hydroxymethyltransferase from Shigella sonnei (strain Ss046).